The primary structure comprises 87 residues: Small ribosomal subunit protein bS18 (87 aa).

The span at 1–19 (MSTRSRARKRSRVRSRTRR) shows a compositional bias: basic residues. The disordered stretch occupies residues 1–25 (MSTRSRARKRSRVRSRTRRKDPIFV).

The protein belongs to the bacterial ribosomal protein bS18 family. As to quaternary structure, part of the 30S ribosomal subunit. Forms a tight heterodimer with protein bS6.

Functionally, binds as a heterodimer with protein bS6 to the central domain of the 16S rRNA, where it helps stabilize the platform of the 30S subunit. The protein is Small ribosomal subunit protein bS18 of Rhodopirellula baltica (strain DSM 10527 / NCIMB 13988 / SH1).